The sequence spans 420 residues: Probable endo-beta-1,4-glucanase celB (420 aa).

Positions 1-18 (MLRKLTPLALALLPLVAG) are cleaved as a signal peptide. Residue Asn118 is glycosylated (N-linked (GlcNAc...) asparagine). Glu215 (nucleophile) is an active-site residue. The Proton donor role is filled by Glu220. N-linked (GlcNAc...) asparagine glycans are attached at residues Asn234, Asn293, and Asn383.

It belongs to the glycosyl hydrolase 7 (cellulase C) family.

It localises to the secreted. The enzyme catalyses Endohydrolysis of (1-&gt;4)-beta-D-glucosidic linkages in cellulose, lichenin and cereal beta-D-glucans.. Has endoglucanase activity on substrates containing beta-1,4 glycosidic bonds, like in carboxymethylcellulose (CMC), hydroxyethylcellulose (HEC) and beta-glucan. Involved in the degradation of complex natural cellulosic substrates. The polypeptide is Probable endo-beta-1,4-glucanase celB (celB) (Aspergillus terreus (strain NIH 2624 / FGSC A1156)).